A 560-amino-acid chain; its full sequence is DNA ligase B (560 aa).

Lysine 124 acts as the N6-AMP-lysine intermediate in catalysis.

Belongs to the NAD-dependent DNA ligase family. LigB subfamily.

It catalyses the reaction NAD(+) + (deoxyribonucleotide)n-3'-hydroxyl + 5'-phospho-(deoxyribonucleotide)m = (deoxyribonucleotide)n+m + AMP + beta-nicotinamide D-nucleotide.. Catalyzes the formation of phosphodiester linkages between 5'-phosphoryl and 3'-hydroxyl groups in double-stranded DNA using NAD as a coenzyme and as the energy source for the reaction. The polypeptide is DNA ligase B (Escherichia coli O6:H1 (strain CFT073 / ATCC 700928 / UPEC)).